A 232-amino-acid polypeptide reads, in one-letter code: tRNA (guanine-N(7)-)-methyltransferase (232 aa).

Positions 63, 88, 115, and 137 each coordinate S-adenosyl-L-methionine. Asp137 is a catalytic residue. Residues Lys141, Asp173, and 211–214 each bind substrate; that span reads TRYE.

This sequence belongs to the class I-like SAM-binding methyltransferase superfamily. TrmB family.

It catalyses the reaction guanosine(46) in tRNA + S-adenosyl-L-methionine = N(7)-methylguanosine(46) in tRNA + S-adenosyl-L-homocysteine. Its pathway is tRNA modification; N(7)-methylguanine-tRNA biosynthesis. In terms of biological role, catalyzes the formation of N(7)-methylguanine at position 46 (m7G46) in tRNA. The polypeptide is tRNA (guanine-N(7)-)-methyltransferase (Rhizobium meliloti (strain 1021) (Ensifer meliloti)).